We begin with the raw amino-acid sequence, 96 residues long: Large ribosomal subunit protein uL23 (96 aa).

It belongs to the universal ribosomal protein uL23 family. In terms of assembly, part of the 50S ribosomal subunit. Contacts protein L29, and trigger factor when it is bound to the ribosome.

Its function is as follows. One of the early assembly proteins it binds 23S rRNA. One of the proteins that surrounds the polypeptide exit tunnel on the outside of the ribosome. Forms the main docking site for trigger factor binding to the ribosome. This is Large ribosomal subunit protein uL23 from Aster yellows witches'-broom phytoplasma (strain AYWB).